The primary structure comprises 894 residues: E3 ubiquitin-protein ligase SH3RF1 (894 aa).

The RING-type zinc-finger motif lies at 12–53 (CPVCLERLDASAKVLPCQHTFCKRCLLGIVGSRNELRCPECR). 2 consecutive SH3 domains span residues 134–193 (PQLP…IIKP) and 196–259 (QPPP…FNSA). The disordered stretch occupies residues 274-323 (VDTAECPSATAAQSSSASKHSDTKKNTRKRHSFTSLTMANKSSQASQNRH). Residues 281–291 (SATAAQSSSAS) are compositionally biased toward low complexity. An interaction with RAC1 region spans residues 293-363 (HSDTKKNTRK…APSQVHISTT (71 aa)). Phosphoserine is present on S305. Residues 306–322 (FTSLTMANKSSQASQNR) are compositionally biased toward polar residues. Residues 448–551 (HLRPQTRPSV…STAGGPAQKP (104 aa)) form an interaction with AKT2 region. Residues 453–514 (TRPSVYVAIY…PGNYVAPVTR (62 aa)) enclose the SH3 3 domain. 2 disordered regions span residues 526–556 (MSTA…GNGV) and 682–751 (LETE…PTLD). S540 is modified (phosphoserine). Positions 700 to 713 (SPESAASACGNSSA) are enriched in polar residues. The span at 715–726 (KPDKDSKKEKKG) shows a compositional bias: basic and acidic residues. A Phosphoserine modification is found at S743. One can recognise an SH3 4 domain in the interval 835-894 (VVCERHRVVVSYPPQSEAELELKEGDIVFVHKKREDGWFKGTLQRNGKTGLFPGSFVENI).

It belongs to the SH3RF family. In terms of assembly, interacts with HERP1. Interacts with RAC1; in a GTP-dependent manner. Interacts with MAP3K10/MLK2 and MAP3K11/MLK3. Interacts with MAPK8IP; this interaction leads to the PJAC complex (POSH-JIP or SH3RF1/MAPK8IP apoptotic complex) with a 1:1 ratio. Interacts with SIAH1. Probably part of a signaling complex that may contain SH3RF1, MAPK8IP, DLK1, MAP2K4/MKK4, MAP2K7/MKK7, MAPK8/JNK1, MAPK9/JNK2, AKT1 and AKT2. Found in a complex with RAC2, MAP3K7/TAK1, MAP2K7/MKK7, MAPK8IP1/JIP1, MAPK8/JNK1 and MAPK9/JNK2. Found in a complex with RAC1, MAP3K11/MLK3, MAP2K7/MKK7, MAPK8IP1/JIP1 and MAPK8/JNK1. Interacts with SH3RF2. Phosphorylated at Ser-305 by AKT1 and AKT2. When phosphorylated, it has reduced ability to bind Rac. Post-translationally, autoubiquitinated. Ubiquitinated by SH3RF2, leading to proteasome-mediated degradation.

The protein localises to the cytoplasm. It localises to the perinuclear region. Its subcellular location is the cell projection. It is found in the lamellipodium. The protein resides in the golgi apparatus. The protein localises to the trans-Golgi network. The enzyme catalyses S-ubiquitinyl-[E2 ubiquitin-conjugating enzyme]-L-cysteine + [acceptor protein]-L-lysine = [E2 ubiquitin-conjugating enzyme]-L-cysteine + N(6)-ubiquitinyl-[acceptor protein]-L-lysine.. The protein operates within protein modification; protein ubiquitination. In terms of biological role, has E3 ubiquitin-protein ligase activity. In the absence of an external substrate, it can catalyze self-ubiquitination. Stimulates ubiquitination of potassium channel KCNJ1, enhancing it's dynamin-dependent and clathrin-independent endocytosis. Acts as a scaffold protein that coordinates with MAPK8IP1/JIP1 in organizing different components of the JNK pathway, including RAC1 or RAC2, MAP3K11/MLK3 or MAP3K7/TAK1, MAP2K7/MKK7, MAPK8/JNK1 and/or MAPK9/JNK2 into a functional multiprotein complex to ensure the effective activation of the JNK signaling pathway. Regulates the differentiation of CD4(+) and CD8(+) T-cells and promotes T-helper 1 (Th1) cell differentiation. Regulates the activation of MAPK8/JNK1 and MAPK9/JNK2 in CD4(+) T-cells and the activation of MAPK8/JNK1 in CD8(+) T-cells. Plays a crucial role in the migration of neocortical neurons in the developing brain. Controls proper cortical neuronal migration and the formation of proximal cytoplasmic dilation in the leading process (PCDLP) in migratory neocortical neurons by regulating the proper localization of activated RAC1 and F-actin assembly. This is E3 ubiquitin-protein ligase SH3RF1 (Sh3rf1) from Rattus norvegicus (Rat).